The sequence spans 178 residues: Riboflavin kinase (178 aa).

Mg(2+) contacts are provided by Thr39 and Asn41. Residue Glu116 is the Nucleophile of the active site.

The protein belongs to the flavokinase family. It depends on Zn(2+) as a cofactor. The cofactor is Mg(2+).

It carries out the reaction riboflavin + ATP = FMN + ADP + H(+). It participates in cofactor biosynthesis; FMN biosynthesis; FMN from riboflavin (ATP route): step 1/1. Catalyzes the phosphorylation of riboflavin (vitamin B2) to form flavin mononucleotide (FMN) coenzyme. This Scheffersomyces stipitis (strain ATCC 58785 / CBS 6054 / NBRC 10063 / NRRL Y-11545) (Yeast) protein is Riboflavin kinase (FMN1).